The chain runs to 148 residues: Small ribosomal subunit protein uS7c (148 aa).

This sequence belongs to the universal ribosomal protein uS7 family. In terms of assembly, part of the 30S ribosomal subunit.

It localises to the plastid. The protein localises to the chloroplast. In terms of biological role, one of the primary rRNA binding proteins, it binds directly to 16S rRNA where it nucleates assembly of the head domain of the 30S subunit. The polypeptide is Small ribosomal subunit protein uS7c (rps7) (Cyanidioschyzon merolae (strain NIES-3377 / 10D) (Unicellular red alga)).